Consider the following 296-residue polypeptide: Light-independent protochlorophyllide reductase iron-sulfur ATP-binding protein (296 aa).

A compositionally biased stretch (basic and acidic residues) spans 1-11 (MTSTITRKEDG). The segment at 1–20 (MTSTITRKEDGEGSVQVKQD) is disordered. ATP contacts are provided by residues 39–44 (GIGKST) and K68. S43 provides a ligand contact to Mg(2+). The [4Fe-4S] cluster site is built by C124 and C158. 209–210 (NR) is an ATP binding site.

Belongs to the NifH/BchL/ChlL family. As to quaternary structure, homodimer. Protochlorophyllide reductase is composed of three subunits; ChlL, ChlN and ChlB. [4Fe-4S] cluster serves as cofactor.

It carries out the reaction chlorophyllide a + oxidized 2[4Fe-4S]-[ferredoxin] + 2 ADP + 2 phosphate = protochlorophyllide a + reduced 2[4Fe-4S]-[ferredoxin] + 2 ATP + 2 H2O. It participates in porphyrin-containing compound metabolism; chlorophyll biosynthesis (light-independent). Component of the dark-operative protochlorophyllide reductase (DPOR) that uses Mg-ATP and reduced ferredoxin to reduce ring D of protochlorophyllide (Pchlide) to form chlorophyllide a (Chlide). This reaction is light-independent. The L component serves as a unique electron donor to the NB-component of the complex, and binds Mg-ATP. In Prochlorococcus marinus (strain NATL1A), this protein is Light-independent protochlorophyllide reductase iron-sulfur ATP-binding protein.